Consider the following 438-residue polypeptide: UDP-N-acetylmuramoylalanine--D-glutamate ligase (438 aa).

112 to 118 (GSNGKST) contacts ATP.

The protein belongs to the MurCDEF family.

It localises to the cytoplasm. The enzyme catalyses UDP-N-acetyl-alpha-D-muramoyl-L-alanine + D-glutamate + ATP = UDP-N-acetyl-alpha-D-muramoyl-L-alanyl-D-glutamate + ADP + phosphate + H(+). The protein operates within cell wall biogenesis; peptidoglycan biosynthesis. Cell wall formation. Catalyzes the addition of glutamate to the nucleotide precursor UDP-N-acetylmuramoyl-L-alanine (UMA). This is UDP-N-acetylmuramoylalanine--D-glutamate ligase from Pectobacterium atrosepticum (strain SCRI 1043 / ATCC BAA-672) (Erwinia carotovora subsp. atroseptica).